A 179-amino-acid chain; its full sequence is MKGGKRIQSTRQNRINSEIRAHEVRLTGLDGEQIGVVSLKEALEKAEEAGADLVEISPNAEPPVCRIMDYGKFLYEKSKTLKEQKKEQKVIQVKEVKFRPGTDEGDYQVKLRNLIRFLEDGDKAKVTLRFRGREMAHQQIGMEVLNRIRQDLDELATVESFPNKIEGRQMIMVLAPKKK.

The protein belongs to the IF-3 family. In terms of assembly, monomer.

It is found in the cytoplasm. In terms of biological role, IF-3 binds to the 30S ribosomal subunit and shifts the equilibrium between 70S ribosomes and their 50S and 30S subunits in favor of the free subunits, thus enhancing the availability of 30S subunits on which protein synthesis initiation begins. This Proteus hauseri protein is Translation initiation factor IF-3.